The chain runs to 182 residues: Large ribosomal subunit protein bL25 (182 aa).

The protein belongs to the bacterial ribosomal protein bL25 family. CTC subfamily. As to quaternary structure, part of the 50S ribosomal subunit; part of the 5S rRNA/L5/L18/L25 subcomplex. Contacts the 5S rRNA. Binds to the 5S rRNA independently of L5 and L18.

This is one of the proteins that binds to the 5S RNA in the ribosome where it forms part of the central protuberance. This is Large ribosomal subunit protein bL25 from Borreliella burgdorferi (strain ZS7) (Borrelia burgdorferi).